The primary structure comprises 119 residues: Large ribosomal subunit protein bL20 (119 aa).

The protein belongs to the bacterial ribosomal protein bL20 family.

Functionally, binds directly to 23S ribosomal RNA and is necessary for the in vitro assembly process of the 50S ribosomal subunit. It is not involved in the protein synthesizing functions of that subunit. The sequence is that of Large ribosomal subunit protein bL20 from Neisseria gonorrhoeae (strain ATCC 700825 / FA 1090).